A 356-amino-acid chain; its full sequence is Histidinol-phosphate aminotransferase (356 aa).

N6-(pyridoxal phosphate)lysine is present on lysine 217.

This sequence belongs to the class-II pyridoxal-phosphate-dependent aminotransferase family. Histidinol-phosphate aminotransferase subfamily. Homodimer. Requires pyridoxal 5'-phosphate as cofactor.

It catalyses the reaction L-histidinol phosphate + 2-oxoglutarate = 3-(imidazol-4-yl)-2-oxopropyl phosphate + L-glutamate. It functions in the pathway amino-acid biosynthesis; L-histidine biosynthesis; L-histidine from 5-phospho-alpha-D-ribose 1-diphosphate: step 7/9. This chain is Histidinol-phosphate aminotransferase, found in Chromobacterium violaceum (strain ATCC 12472 / DSM 30191 / JCM 1249 / CCUG 213 / NBRC 12614 / NCIMB 9131 / NCTC 9757 / MK).